We begin with the raw amino-acid sequence, 656 residues long: Vi polysaccharide export protein VexE (656 aa).

May be involved in translocation of the Vi antigen. The protein is Vi polysaccharide export protein VexE (vexE) of Salmonella typhi.